The chain runs to 528 residues: GTPase Der (528 aa).

Composition is skewed to acidic residues over residues 1-12 (MDVEGAFADEEE) and 30-62 (GYDD…PDFG). The disordered stretch occupies residues 1 to 62 (MDVEGAFADE…EDDFAAPDFG (62 aa)). 2 EngA-type G domains span residues 90–253 (CTVA…PEEP) and 263–436 (RRVA…ENWD). GTP is bound by residues 96-103 (GRPNVGKS), 143-147 (DTGGW), 205-208 (NKFD), 269-276 (GKPNVGKS), 316-320 (DTAGL), and 381-384 (NKWD). The 83-residue stretch at 437–519 (RRVSTGQLNN…PIRIAVRVRE (83 aa)) folds into the KH-like domain.

The protein belongs to the TRAFAC class TrmE-Era-EngA-EngB-Septin-like GTPase superfamily. EngA (Der) GTPase family. As to quaternary structure, associates with the 50S ribosomal subunit.

Its function is as follows. GTPase that plays an essential role in the late steps of ribosome biogenesis. This Corynebacterium efficiens (strain DSM 44549 / YS-314 / AJ 12310 / JCM 11189 / NBRC 100395) protein is GTPase Der.